A 77-amino-acid chain; its full sequence is Acyl carrier protein (77 aa).

The 76-residue stretch at 2 to 77 (STVEERVKKI…DAIDYILANQ (76 aa)) folds into the Carrier domain. Serine 37 is subject to O-(pantetheine 4'-phosphoryl)serine.

It belongs to the acyl carrier protein (ACP) family. Post-translationally, 4'-phosphopantetheine is transferred from CoA to a specific serine of apo-ACP by AcpS. This modification is essential for activity because fatty acids are bound in thioester linkage to the sulfhydryl of the prosthetic group.

It localises to the cytoplasm. It functions in the pathway lipid metabolism; fatty acid biosynthesis. In terms of biological role, carrier of the growing fatty acid chain in fatty acid biosynthesis. This chain is Acyl carrier protein, found in Hahella chejuensis (strain KCTC 2396).